Consider the following 154-residue polypeptide: Myoglobin (154 aa).

The Globin domain occupies 2-148 (GLSDGEWQLV…FRNDIAAKYK (147 aa)). S4 is modified (phosphoserine). Residue H65 coordinates nitrite. An O2-binding site is contributed by H65. T68 carries the phosphothreonine modification. Residue H94 coordinates heme b.

As to quaternary structure, monomer.

It localises to the cytoplasm. Its subcellular location is the sarcoplasm. It carries out the reaction Fe(III)-heme b-[protein] + nitric oxide + H2O = Fe(II)-heme b-[protein] + nitrite + 2 H(+). It catalyses the reaction H2O2 + AH2 = A + 2 H2O. Functionally, monomeric heme protein which primary function is to store oxygen and facilitate its diffusion within muscle tissues. Reversibly binds oxygen through a pentacoordinated heme iron and enables its timely and efficient release as needed during periods of heightened demand. Depending on the oxidative conditions of tissues and cells, and in addition to its ability to bind oxygen, it also has a nitrite reductase activity whereby it regulates the production of bioactive nitric oxide. Under stress conditions, like hypoxia and anoxia, it also protects cells against reactive oxygen species thanks to its pseudoperoxidase activity. The protein is Myoglobin of Hystrix cristata (North African crested porcupine).